The following is a 161-amino-acid chain: Calcium-binding protein CML24 (161 aa).

4 EF-hand domains span residues 13–48 (GSMD…LSPT), 49–84 (ASPE…GIGG), 90–125 (NDVS…LGEK), and 126–161 (CSVQ…GGGA). Aspartate 26, asparagine 28, aspartate 30, lysine 32, glutamate 37, aspartate 62, aspartate 64, asparagine 66, glutamate 73, aspartate 103, aspartate 105, asparagine 107, arginine 109, glutamate 114, aspartate 139, aspartate 141, aspartate 143, cysteine 145, and glutamate 150 together coordinate Ca(2+).

As to expression, expressed in seed coat, seedling radical, cotyledons, hypocotyl, shoot apex and elongating root. Expressed in the vasculature of cotyledons, leaves and roots. Highly expressed in guard cells, trichomes and hydathodes. Expressed in inflorescence stem branch points, silique abscission zone, young and mature styles and stigmatic papillae, mature anthers and developing seed.

Its function is as follows. Calcium-binding protein that may positively regulate abscisic acid (ABA) inhibition of germination and seedling development. May be required for photoperiod-induced flowering and function in ion homeostasis. This Arabidopsis thaliana (Mouse-ear cress) protein is Calcium-binding protein CML24 (CML24).